The sequence spans 264 residues: Apolipoprotein A-I (264 aa).

Positions 1-18 (MKAVVLAVAVLFLTGSQA) are cleaved as a signal peptide. Tandem repeats lie at residues 67-88 (LKLL…ADLG) and 89-110 (PVTQ…QEMN). The segment at 67–264 (LKLLDNWDTL…DQATKQLTAQ (198 aa)) is 10 X approximate tandem repeats. Methionine sulfoxide is present on M109. One copy of the 3; half-length repeat lies at 111-121 (KDLQEVKQKVQ). 5 tandem repeats follow at residues 122 to 143 (PYLD…EKVG), 144 to 165 (PLGT…EKLT), 166 to 187 (PLGE…TQLA), 188 to 207 (PYSD…LRDS), and 208 to 229 (TTFA…EKAK). A 9; half-length repeat occupies 230–240 (PALEDLRQGLL). Repeat unit 10 spans residues 241 to 264 (PVLESLKASILSSIDQATKQLTAQ).

This sequence belongs to the apolipoprotein A1/A4/E family. In terms of assembly, homodimer. Interacts with APOA1BP and CLU. Component of a sperm activating protein complex (SPAP), consisting of APOA1, an immunoglobulin heavy chain, an immunoglobulin light chain and albumin. Interacts with NDRG1. Interacts with SCGB3A2. Interacts with NAXE and YJEFN3. In terms of processing, glycosylated. Palmitoylated. Post-translationally, phosphorylation sites are present in the extracellular medium.

Its subcellular location is the secreted. In terms of biological role, participates in the reverse transport of cholesterol from tissues to the liver for excretion by promoting cholesterol efflux from tissues and by acting as a cofactor for the lecithin cholesterol acyltransferase (LCAT). As part of the SPAP complex, activates spermatozoa motility. In Chinchilla lanigera (Long-tailed chinchilla), this protein is Apolipoprotein A-I (APOA1).